The sequence spans 358 residues: Aminomethyltransferase (358 aa).

This sequence belongs to the GcvT family. The glycine cleavage system is composed of four proteins: P, T, L and H.

It catalyses the reaction N(6)-[(R)-S(8)-aminomethyldihydrolipoyl]-L-lysyl-[protein] + (6S)-5,6,7,8-tetrahydrofolate = N(6)-[(R)-dihydrolipoyl]-L-lysyl-[protein] + (6R)-5,10-methylene-5,6,7,8-tetrahydrofolate + NH4(+). Functionally, the glycine cleavage system catalyzes the degradation of glycine. The sequence is that of Aminomethyltransferase from Francisella tularensis subsp. holarctica (strain FTNF002-00 / FTA).